Consider the following 176-residue polypeptide: Acireductone dioxygenase (176 aa).

Fe(2+)-binding residues include His91, His93, Glu97, and His136. Residues His91, His93, Glu97, and His136 each contribute to the Ni(2+) site.

This sequence belongs to the acireductone dioxygenase (ARD) family. In terms of assembly, monomer. Fe(2+) serves as cofactor. Requires Ni(2+) as cofactor.

The enzyme catalyses 1,2-dihydroxy-5-(methylsulfanyl)pent-1-en-3-one + O2 = 3-(methylsulfanyl)propanoate + CO + formate + 2 H(+). It carries out the reaction 1,2-dihydroxy-5-(methylsulfanyl)pent-1-en-3-one + O2 = 4-methylsulfanyl-2-oxobutanoate + formate + 2 H(+). It functions in the pathway amino-acid biosynthesis; L-methionine biosynthesis via salvage pathway; L-methionine from S-methyl-5-thio-alpha-D-ribose 1-phosphate: step 5/6. Catalyzes 2 different reactions between oxygen and the acireductone 1,2-dihydroxy-3-keto-5-methylthiopentene (DHK-MTPene) depending upon the metal bound in the active site. Fe-containing acireductone dioxygenase (Fe-ARD) produces formate and 2-keto-4-methylthiobutyrate (KMTB), the alpha-ketoacid precursor of methionine in the methionine recycle pathway. Ni-containing acireductone dioxygenase (Ni-ARD) produces methylthiopropionate, carbon monoxide and formate, and does not lie on the methionine recycle pathway. The polypeptide is Acireductone dioxygenase (Picosynechococcus sp. (strain ATCC 27264 / PCC 7002 / PR-6) (Agmenellum quadruplicatum)).